Consider the following 253-residue polypeptide: Ubiquinone biosynthesis O-methyltransferase (253 aa).

Residues arginine 47, glycine 78, aspartate 99, and methionine 141 each contribute to the S-adenosyl-L-methionine site.

This sequence belongs to the methyltransferase superfamily. UbiG/COQ3 family.

The enzyme catalyses a 3-demethylubiquinol + S-adenosyl-L-methionine = a ubiquinol + S-adenosyl-L-homocysteine + H(+). The catalysed reaction is a 3-(all-trans-polyprenyl)benzene-1,2-diol + S-adenosyl-L-methionine = a 2-methoxy-6-(all-trans-polyprenyl)phenol + S-adenosyl-L-homocysteine + H(+). It functions in the pathway cofactor biosynthesis; ubiquinone biosynthesis. Its function is as follows. O-methyltransferase that catalyzes the 2 O-methylation steps in the ubiquinone biosynthetic pathway. The chain is Ubiquinone biosynthesis O-methyltransferase from Rhodopseudomonas palustris (strain BisA53).